Consider the following 312-residue polypeptide: Mevalonate kinase (312 aa).

Position 104–114 (P104–S114) interacts with ATP. D155 acts as the Proton acceptor in catalysis.

This sequence belongs to the GHMP kinase family. Mevalonate kinase subfamily. As to quaternary structure, homodimer. It depends on Mg(2+) as a cofactor.

It localises to the cytoplasm. The enzyme catalyses (R)-mevalonate + ATP = (R)-5-phosphomevalonate + ADP + H(+). Its pathway is isoprenoid biosynthesis; isopentenyl diphosphate biosynthesis via mevalonate pathway; isopentenyl diphosphate from (R)-mevalonate: step 1/3. Farnesyl- and geranyl-pyrophosphates are competitive inhibitors. Slightly inhibited by high concentration of ATP. Functionally, catalyzes the phosphorylation of (R)-mevalonate (MVA) to (R)-mevalonate 5-phosphate (MVAP). Functions in the mevalonate (MVA) pathway leading to isopentenyl diphosphate (IPP), a key precursor for the biosynthesis of isoprenoid compounds such as archaeal membrane lipids. The protein is Mevalonate kinase of Methanocaldococcus jannaschii (strain ATCC 43067 / DSM 2661 / JAL-1 / JCM 10045 / NBRC 100440) (Methanococcus jannaschii).